The primary structure comprises 74 residues: Defensin J1-2 (74 aa).

Positions 1–27 are cleaved as a signal peptide; the sequence is MAGFSKVIATIFLMMMLVFATGMVAEA. Cystine bridges form between Cys-30–Cys-74, Cys-41–Cys-61, Cys-47–Cys-68, and Cys-51–Cys-70.

Belongs to the DEFL family. As to quaternary structure, monomer. In terms of tissue distribution, expressed in flowers and in young fruits.

The protein resides in the secreted. In terms of biological role, plant defense peptide with antifungal activity against F.oxysporum and B.cinerea. The protein is Defensin J1-2 of Capsicum annuum (Capsicum pepper).